Here is a 186-residue protein sequence, read N- to C-terminus: CASP-like protein 7 (186 aa).

Over 1–26 the chain is Cytoplasmic; it reads MKGGSIEAGEVSKDASPRKGVARGLS. Residues 27 to 47 form a helical membrane-spanning segment; the sequence is IMDFILRIIAAVATLGSALAM. The Extracellular portion of the chain corresponds to 48 to 72; the sequence is GTTNETLPFATQFIKFRAEFDDLPS. An N-linked (GlcNAc...) asparagine glycan is attached at asparagine 51. The chain crosses the membrane as a helical span at residues 73–93; that stretch reads LVFFVMANAVVCGYLVLSLMI. The Cytoplasmic segment spans residues 94–107; that stretch reads SVFHILRSTPVKSR. The chain crosses the membrane as a helical span at residues 108–128; the sequence is ILLVALDTVMLSLVTASASAA. Residues 129–162 lie on the Extracellular side of the membrane; that stretch reads TSIVYIAHNGNTGANWFAICQQYNNFCERISGSL. Residues 163–183 traverse the membrane as a helical segment; the sequence is IGSYIAVALFIILIMLSLVAI. The Cytoplasmic segment spans residues 184 to 186; sequence SRN.

This sequence belongs to the Casparian strip membrane proteins (CASP) family. In terms of assembly, homodimer and heterodimers.

The protein resides in the cell membrane. Functionally, regulates membrane-cell wall junctions and localized cell wall deposition. Required for establishment of the Casparian strip membrane domain (CSD) and the subsequent formation of Casparian strips, a cell wall modification of the root endodermis that determines an apoplastic barrier between the intraorganismal apoplasm and the extraorganismal apoplasm and prevents lateral diffusion. The sequence is that of CASP-like protein 7 from Glycine max (Soybean).